The following is a 475-amino-acid chain: CAAX prenyl protease 1 homolog (475 aa).

The Lumenal segment spans residues 1–18; it reads MGMWASVDAMWDFPAEKR. Residues 19–39 traverse the membrane as a helical segment; the sequence is IFGAVLLFSWTVYLWETFLAQ. Residues 40–81 are Nuclear-facing; that stretch reads RQRRIYKTTTRVPAELEQIMDSDTFEKSRLYQLDKSTFSFWS. Residues 82–102 traverse the membrane as a helical segment; that stretch reads GLYSEVEGTFILLFGGIPYLW. The Lumenal portion of the chain corresponds to 103–123; sequence RLSGQFCSSAGFGPEYEIIQS. A helical transmembrane segment spans residues 124 to 144; sequence LVFLLLATLFSALTGLPWSLY. Residues 145–170 lie on the Nuclear side of the membrane; that stretch reads NTFVIEEKHGFNHQTLEFFMKDAIKK. Residues 171-191 traverse the membrane as a helical segment; it reads FIVTQCILLPVSALLLYIIKI. At 192-195 the chain is on the lumenal side; that stretch reads GGDY. Residues 196–216 traverse the membrane as a helical segment; the sequence is FFIYAWLFTLVVSLVLVTIYA. Residues 217–347 are Nuclear-facing; that stretch reads DYIAPLFDKF…GHWKLGHTVK (131 aa). The tract at residues 293–314 is disordered; the sequence is DNQEESGMEARNEGEGDSEEVK. The span at 300–314 shows a compositional bias: basic and acidic residues; the sequence is MEARNEGEGDSEEVK. His-335 provides a ligand contact to Zn(2+). The active site involves Glu-336. His-339 serves as a coordination point for Zn(2+). The helical transmembrane segment at 348 to 368 threads the bilayer; the sequence is NIIISQMNSFLCFFLFAVLIG. The Lumenal portion of the chain corresponds to 369 to 382; that stretch reads RRELFAAFGFYDSQ. The helical transmembrane segment at 383-405 threads the bilayer; it reads PTLIGLLIIFQFIFSPYNEVLSF. Residues 406-475 are Nuclear-facing; it reads CLTVLSRRFE…LQALKNAKQD (70 aa). Residue Glu-415 participates in Zn(2+) binding.

The protein belongs to the peptidase M48A family. The cofactor is Zn(2+).

It is found in the endoplasmic reticulum membrane. The protein resides in the nucleus inner membrane. The protein localises to the early endosome membrane. Its subcellular location is the late endosome membrane. It carries out the reaction Hydrolyzes the peptide bond -P2-(S-farnesyl or geranylgeranyl)C-P1'-P2'-P3'-COOH where P1' and P2' are amino acids with aliphatic side chains and P3' is any C-terminal residue.. Inhibited by HIV protease inhibitors, such as lopinavir, tipranavir and nelfinavir, leading to defects in lamin A/LMNA maturation and accumulation of prelamin-A/C precursors in cells. This causes defects in nuclear envelope integrity and release of DNA in the cytosol, activating the AIM2 inflammasome. In terms of biological role, transmembrane metalloprotease whose catalytic activity is critical for processing lamin A/LMNA on the inner nuclear membrane and clearing clogged translocons on the endoplasmic reticulum. Proteolytically removes the C-terminal three residues of farnesylated proteins. Also plays an antiviral role independently of its protease activity by restricting enveloped RNA and DNA viruses. Mechanistically, controls IFITM antiviral pathway to hinder viruses from breaching the endosomal barrier by modulating membrane fluidity. The sequence is that of CAAX prenyl protease 1 homolog from Mus musculus (Mouse).